The chain runs to 219 residues: Transcriptional regulatory protein QseB (219 aa).

Residues 2–116 (RILLVEDDTL…EVAARLEALV (115 aa)) enclose the Response regulatory domain. Position 51 is a 4-aspartylphosphate (Asp51). Positions 124–218 (SSELRHGQVT…VHGIGYTLGD (95 aa)) form a DNA-binding region, ompR/PhoB-type.

Post-translationally, phosphorylated by QseC.

The protein resides in the cytoplasm. Its function is as follows. Member of a two-component regulatory system QseB/QseC. Activates the flagella regulon by activating transcription of flhDC. This is Transcriptional regulatory protein QseB (qseB) from Salmonella typhimurium (strain LT2 / SGSC1412 / ATCC 700720).